A 553-amino-acid polypeptide reads, in one-letter code: Probable glucomannan 4-beta-mannosyltransferase 1 (553 aa).

The helical transmembrane segment at 64 to 84 (LLPVFKGLVVMCLVLSIIVFF) threads the bilayer. Asp-163 is an active-site residue. Substrate is bound by residues Asp-222 and Asp-224. Asp-316 is a catalytic residue. A run of 4 helical transmembrane segments spans residues 395 to 415 (VAVHFLTFFFYCIIVPTSVFF), 431 to 451 (LISIFHTLATPRSFYLVIFWV), 510 to 530 (EVMVGVYILGCALYGLIYGHT), and 531 to 551 (WLHFYLFLQATAFFVSGFGFV).

This sequence belongs to the glycosyltransferase 2 family. Plant cellulose synthase-like A subfamily.

The protein resides in the golgi apparatus membrane. The catalysed reaction is GDP-mannose + (glucomannan)n = GDP + (glucomannan)n+1.. Functionally, probable mannan synthase which consists of a 4-beta-mannosyltransferase activity on mannan using GDP-mannose. The beta-1,4-mannan product is the backbone for galactomannan synthesis by galactomannan galactosyltransferase. Galactomannan is a noncellulosic polysaccharides of plant cell wall. The chain is Probable glucomannan 4-beta-mannosyltransferase 1 from Arabidopsis thaliana (Mouse-ear cress).